Consider the following 181-residue polypeptide: ATP-dependent protease subunit HslV (181 aa).

The active site involves Thr7. 3 residues coordinate Na(+): Ala166, Cys169, and Thr172.

This sequence belongs to the peptidase T1B family. HslV subfamily. In terms of assembly, a double ring-shaped homohexamer of HslV is capped on each side by a ring-shaped HslU homohexamer. The assembly of the HslU/HslV complex is dependent on binding of ATP.

The protein localises to the cytoplasm. The catalysed reaction is ATP-dependent cleavage of peptide bonds with broad specificity.. Its activity is regulated as follows. Allosterically activated by HslU binding. Protease subunit of a proteasome-like degradation complex believed to be a general protein degrading machinery. The chain is ATP-dependent protease subunit HslV from Anaeromyxobacter dehalogenans (strain 2CP-C).